The sequence spans 582 residues: tRNA(Ile)-lysidine synthase (582 aa).

46-51 (SGGADS) is a binding site for ATP. One can recognise a CMP/dCMP-type deaminase domain in the interval 402–525 (DPLHAAMGEA…DLLADHWGWR (124 aa)). Residues 548 to 582 (VRRRSADTPQTPNAETPAPRSSRSTSASGKPTMLE) form a disordered region. Low complexity predominate over residues 563-575 (TPAPRSSRSTSAS).

Belongs to the tRNA(Ile)-lysidine synthase family.

It localises to the cytoplasm. It catalyses the reaction cytidine(34) in tRNA(Ile2) + L-lysine + ATP = lysidine(34) in tRNA(Ile2) + AMP + diphosphate + H(+). Functionally, ligates lysine onto the cytidine present at position 34 of the AUA codon-specific tRNA(Ile) that contains the anticodon CAU, in an ATP-dependent manner. Cytidine is converted to lysidine, thus changing the amino acid specificity of the tRNA from methionine to isoleucine. The sequence is that of tRNA(Ile)-lysidine synthase from Deinococcus radiodurans (strain ATCC 13939 / DSM 20539 / JCM 16871 / CCUG 27074 / LMG 4051 / NBRC 15346 / NCIMB 9279 / VKM B-1422 / R1).